We begin with the raw amino-acid sequence, 273 residues long: Manganese catalase (273 aa).

Residue glutamate 35 participates in Mn(2+) binding. Ca(2+) contacts are provided by aspartate 57 and aspartate 61. 4 residues coordinate Mn(2+): glutamate 66, histidine 69, glutamate 149, and histidine 182. The Ca(2+) site is built by asparagine 220, serine 222, and glycine 224. A disordered region spans residues 254-273 (EKPELKPAPPCVHNTLPGRE).

This sequence belongs to the manganese catalase family. Homohexamer. Ca(2+) is required as a cofactor. The cofactor is Mn(2+).

It catalyses the reaction 2 H2O2 = O2 + 2 H2O. With respect to regulation, inhibited in the presence of EDTA. Resistant to inhibition by sodium azide. Its function is as follows. Catalyzes the decomposition of hydrogen peroxide into water and oxygen. No significant activity could be detected with any of the other tested substrates, including glutathione, pyrogallol, NADH, NADPH and o-dianisidine. This is Manganese catalase from Bacillus subtilis.